A 583-amino-acid chain; its full sequence is MTIQLQKPDITELKPRITVFGVGGGGGNAVNNMITVGLQGVDFVVANTDAQALTMTKADRVIQLGVNVTEGLGAGSQPEVGRAAAEECIDEIIDHLNGTHMCFVTAGMGGGTGTGAAPVVAQAARNKGILTVGVVTKPFHFEGGRRMRLAEQGIEELQKSVDTLIVIPNQNLFRIANDKTTFADAFAMADQVLYSGVACITDLMVKEGLINLDFADVRSVMREMARPMMGTGEASGPARAMQAAEAAIANPLLDETSMKGAQGLLISITGGRDLTLFEVDEAATRIREEVDPDANIILGATFDEALEGLIRVSVVATGIDRVAGIGEQNIAEMRAAAAKPLIRPSAAVAPAPAAVQPAHAVSQAPKTVDQIAQTIRSAEAEMERELGFAAHQQPSQDFRPQSKLFASSPAEAPAALRPAQPVQQAAPAPVAQAPVYHAPEQVAVPAPRMQQAQAPVYQEPAPVGRQPEPVRMPKVEDFPPVVKAEMDHRDRATPVAQEERGPMGLLKRITNSLGRREEEEVPSDMMDAPSMAPQRRAPLSPEASLYAPRRGQLDDHGRATPSSSSHHDDDQLEIPAFLRRQSN.

GTP-binding positions include 24–28 (GGGGN), 111–113 (GTG), Glu-142, Arg-146, and Asp-190. Disordered stretches follow at residues 391-425 (HQQPSQDFRPQSKLFASSPAEAPAALRPAQPVQQA) and 510-583 (TNSL…RQSN). Residues 412-425 (APAALRPAQPVQQA) are compositionally biased toward low complexity.

This sequence belongs to the FtsZ family. Homodimer. Polymerizes to form a dynamic ring structure in a strictly GTP-dependent manner. Interacts directly with several other division proteins.

The protein localises to the cytoplasm. Functionally, essential cell division protein that forms a contractile ring structure (Z ring) at the future cell division site. The regulation of the ring assembly controls the timing and the location of cell division. One of the functions of the FtsZ ring is to recruit other cell division proteins to the septum to produce a new cell wall between the dividing cells. Binds GTP and shows GTPase activity. The sequence is that of Cell division protein FtsZ from Rhizobium radiobacter (Agrobacterium tumefaciens).